Here is a 680-residue protein sequence, read N- to C-terminus: Chaperone protein dnaK3 (680 aa).

Residue Thr205 is modified to Phosphothreonine; by autocatalysis. A disordered region spans residues 640 to 680 (GRERRRDDDEDEWAEPPRTRRSRSYSQRADSAPWDDWDDDW).

It belongs to the heat shock protein 70 family.

In terms of biological role, acts as a chaperone. In Thermosynechococcus vestitus (strain NIES-2133 / IAM M-273 / BP-1), this protein is Chaperone protein dnaK3 (dnaK3).